The primary structure comprises 527 residues: SusD-like protein P25 (527 aa).

The first 15 residues, 1 to 15 (MKIQNIIVYVFLIFS), serve as a signal peptide directing secretion. C16 carries the N-palmitoyl cysteine lipid modification. C16 is lipidated: S-diacylglycerol cysteine.

This sequence belongs to the SusD family.

It localises to the cell outer membrane. Functionally, polysaccharide-binding protein probably involved in ulvan degradation. Ulvan is the main polysaccharide component of the Ulvales (green seaweed) cell wall. It is composed of disaccharide building blocks comprising 3-sulfated rhamnose (Rha3S) linked to D-glucuronic acid (GlcA), L-iduronic acid (IduA), or D-xylose (Xyl). The SusD-like protein may mediate ulvan oligomer-binding before transport in the periplasm for further degradation. The polypeptide is SusD-like protein P25 (Formosa agariphila (strain DSM 15362 / KCTC 12365 / LMG 23005 / KMM 3901 / M-2Alg 35-1)).